Reading from the N-terminus, the 154-residue chain is MVKAVCVLRGDAKVAGTVTFEQESESAPTTITWDITGNDPNAERGFHIHTFGDNTNGCTSAGPHFNPHGKTHGAPTDAARHVGDLGNIKTDGQGNAKGSVQDSHVKLIGPHSVVGRTVVVHGGTDDLGKGGNEESLKTGNAGPRPACGVIGVAN.

Cu cation is bound by residues His47, His49, and His64. Cys58 and Cys147 form a disulfide bridge. Residues His64, His72, His81, and Asp84 each contribute to the Zn(2+) site. Cu cation is bound at residue His121. The segment at Gly122–Pro143 is disordered. The span at Gly123 to Leu136 shows a compositional bias: basic and acidic residues. Residue Arg144 coordinates substrate.

The protein belongs to the Cu-Zn superoxide dismutase family. Homodimer. Cu cation serves as cofactor. Requires Zn(2+) as cofactor.

Its subcellular location is the cytoplasm. It carries out the reaction 2 superoxide + 2 H(+) = H2O2 + O2. Destroys radicals which are normally produced within the cells and which are toxic to biological systems. The sequence is that of Superoxide dismutase [Cu-Zn] (SOD1) from Cordyceps militaris (Caterpillar fungus).